The sequence spans 353 residues: Thiamine thiazole synthase 1, chloroplastic (353 aa).

Residues 1 to 48 constitute a chloroplast transit peptide; the sequence is MATLTSSICSKPKASVFDPHKSSFHGVPIATQARLSPVKSTPVNLAVT. Substrate contacts are provided by residues Ala97, 117-118, Gly125, and Ala190; that span reads EQ. Cys219 is modified (2,3-didehydroalanine (Cys)). Substrate-binding positions include Asp221, His236, Met288, and 298 to 300; that span reads RMG.

Belongs to the THI4 family. Homooctamer. Requires Fe cation as cofactor. Post-translationally, during the catalytic reaction, a sulfide is transferred from Cys-219 to a reaction intermediate, generating a dehydroalanine residue.

Its subcellular location is the plastid. It is found in the chloroplast. It catalyses the reaction [ADP-thiazole synthase]-L-cysteine + glycine + NAD(+) = [ADP-thiazole synthase]-dehydroalanine + ADP-5-ethyl-4-methylthiazole-2-carboxylate + nicotinamide + 3 H2O + 2 H(+). Its function is as follows. Involved in biosynthesis of the thiamine precursor thiazole. Catalyzes the conversion of NAD and glycine to adenosine diphosphate 5-(2-hydroxyethyl)-4-methylthiazole-2-carboxylic acid (ADT), an adenylated thiazole intermediate. The reaction includes an iron-dependent sulfide transfer from a conserved cysteine residue of the protein to a thiazole intermediate. The enzyme can only undergo a single turnover, which suggests it is a suicide enzyme. May have additional roles in adaptation to various stress conditions and in DNA damage tolerance. This is Thiamine thiazole synthase 1, chloroplastic from Vitis vinifera (Grape).